A 380-amino-acid polypeptide reads, in one-letter code: Cytochrome b (380 aa).

The next 4 helical transmembrane spans lie at 34–54 (FGSL…LLAA), 78–99 (WLIR…YLHI), 114–134 (WNTG…GYVL), and 179–199 (FFTL…IHLT). Heme b-binding residues include His-84 and His-98. Heme b-binding residues include His-183 and His-197. His-202 lines the a ubiquinone pocket. 4 consecutive transmembrane segments (helical) span residues 227-247 (LKDT…ALFS), 289-309 (LGGV…PLLH), 321-341 (LFQL…WVGS), and 348-368 (FIII…ILFP).

The protein belongs to the cytochrome b family. As to quaternary structure, the cytochrome bc1 complex contains 11 subunits: 3 respiratory subunits (MT-CYB, CYC1 and UQCRFS1), 2 core proteins (UQCRC1 and UQCRC2) and 6 low-molecular weight proteins (UQCRH/QCR6, UQCRB/QCR7, UQCRQ/QCR8, UQCR10/QCR9, UQCR11/QCR10 and a cleavage product of UQCRFS1). This cytochrome bc1 complex then forms a dimer. Heme b is required as a cofactor.

Its subcellular location is the mitochondrion inner membrane. In terms of biological role, component of the ubiquinol-cytochrome c reductase complex (complex III or cytochrome b-c1 complex) that is part of the mitochondrial respiratory chain. The b-c1 complex mediates electron transfer from ubiquinol to cytochrome c. Contributes to the generation of a proton gradient across the mitochondrial membrane that is then used for ATP synthesis. This chain is Cytochrome b (MT-CYB), found in Grus nigricollis (Black-necked crane).